An 859-amino-acid chain; its full sequence is DNA mismatch repair protein MutS (859 aa).

612 to 619 (GPNMGGKS) contacts ATP. The segment at 797-822 (SKPLAPSATPPSSYAAPSPAAAPAQA) is disordered.

The protein belongs to the DNA mismatch repair MutS family.

Its function is as follows. This protein is involved in the repair of mismatches in DNA. It is possible that it carries out the mismatch recognition step. This protein has a weak ATPase activity. This is DNA mismatch repair protein MutS from Alcanivorax borkumensis (strain ATCC 700651 / DSM 11573 / NCIMB 13689 / SK2).